Reading from the N-terminus, the 809-residue chain is Phospholipase D alpha 1 (809 aa).

The region spanning 1-125 is the C2 domain; the sequence is MAQILLHGTL…LDGHEIDKWV (125 aa). Ca(2+) is bound at residue aspartate 186. A PLD phosphodiesterase 1 domain is found at 326 to 365; that stretch reads TMFTHHQKIVVVDSALPGGGGSDKRRIVSFVGGLDLCDGR. Residues histidine 331, lysine 333, and aspartate 338 contribute to the active site. Histidine 331 lines the a 1,2-diacyl-sn-glycero-3-phosphate pocket. The Ca(2+) site is built by histidine 371 and histidine 405. Residues glutamine 521 and histidine 660 each coordinate a 1,2-diacyl-sn-glycero-3-phosphate. Positions 655–682 constitute a PLD phosphodiesterase 2 domain; the sequence is FMIYVHTKMMIVDDEYIIIGSANINQRS. Residues histidine 660, lysine 662, and aspartate 667 contribute to the active site. Ca(2+) is bound at residue glutamate 721.

It belongs to the phospholipase D family. C2-PLD subfamily. Ca(2+) serves as cofactor.

The catalysed reaction is a 1,2-diacyl-sn-glycero-3-phosphocholine + H2O = a 1,2-diacyl-sn-glycero-3-phosphate + choline + H(+). Its function is as follows. Hydrolyzes glycerol-phospholipids at the terminal phosphodiesteric bond. Plays an important role in various cellular processes. This chain is Phospholipase D alpha 1 (PLD1), found in Vigna unguiculata (Cowpea).